A 1436-amino-acid chain; its full sequence is MAP kinase kinase kinase win1 (1436 aa).

The disordered stretch occupies residues 56–85 (LELPNNGKEENHRRPSVARSSSDRSKASAK). The segment covering 76–85 (SSDRSKASAK) has biased composition (basic and acidic residues). The residue at position 224 (Ser224) is a Phosphoserine. Position 226 is a phosphothreonine (Thr226). Residues 282–1123 (EDSDLDSETS…SNITIRWQQG (842 aa)) are interaction with tea4. The Protein kinase domain maps to 1120-1406 (WQQGGLIGSG…AAELLMDPWV (287 aa)). ATP contacts are provided by residues 1126 to 1134 (IGSGSFGTV) and Lys1149. The Proton acceptor role is filled by Asp1244.

Belongs to the protein kinase superfamily. STE Ser/Thr protein kinase family. MAP kinase kinase kinase subfamily. As to quaternary structure, interacts with tea4.

It catalyses the reaction L-seryl-[protein] + ATP = O-phospho-L-seryl-[protein] + ADP + H(+). It carries out the reaction L-threonyl-[protein] + ATP = O-phospho-L-threonyl-[protein] + ADP + H(+). Functionally, involved in a signal transduction pathway that is activated by changes in the osmolarity of the extracellular environment. Activates the wis1 MAP kinase kinase by phosphorylation. This Schizosaccharomyces pombe (strain 972 / ATCC 24843) (Fission yeast) protein is MAP kinase kinase kinase win1 (win1).